The chain runs to 383 residues: Probable protein phosphatase 2C 13 (383 aa).

One can recognise a PPM-type phosphatase domain in the interval 78–349 (RSGSFADIRS…DNMTVIVICF (272 aa)). 4 residues coordinate Mn(2+): D121, G122, D297, and D340.

Belongs to the PP2C family. The cofactor is Mg(2+). It depends on Mn(2+) as a cofactor.

It catalyses the reaction O-phospho-L-seryl-[protein] + H2O = L-seryl-[protein] + phosphate. It carries out the reaction O-phospho-L-threonyl-[protein] + H2O = L-threonyl-[protein] + phosphate. This is Probable protein phosphatase 2C 13 from Arabidopsis thaliana (Mouse-ear cress).